We begin with the raw amino-acid sequence, 378 residues long: Chaperone protein DnaJ (378 aa).

The region spanning D3–G67 is the J domain. Residues G132 to R214 form a CR-type zinc finger. Positions 145, 148, 162, 165, 188, 191, 202, and 205 each coordinate Zn(2+). CXXCXGXG motif repeat units follow at residues C145 to G152, C162 to G169, C188 to G195, and C202 to G209.

The protein belongs to the DnaJ family. Homodimer. The cofactor is Zn(2+).

The protein resides in the cytoplasm. Functionally, participates actively in the response to hyperosmotic and heat shock by preventing the aggregation of stress-denatured proteins and by disaggregating proteins, also in an autonomous, DnaK-independent fashion. Unfolded proteins bind initially to DnaJ; upon interaction with the DnaJ-bound protein, DnaK hydrolyzes its bound ATP, resulting in the formation of a stable complex. GrpE releases ADP from DnaK; ATP binding to DnaK triggers the release of the substrate protein, thus completing the reaction cycle. Several rounds of ATP-dependent interactions between DnaJ, DnaK and GrpE are required for fully efficient folding. Also involved, together with DnaK and GrpE, in the DNA replication of plasmids through activation of initiation proteins. The protein is Chaperone protein DnaJ of Prochlorococcus marinus (strain SARG / CCMP1375 / SS120).